A 559-amino-acid polypeptide reads, in one-letter code: DNA primase (559 aa).

The segment at 37-61 adopts a CHC2-type zinc-finger fold; sequence CPFHEERSASFSVNQIKGFYHCFGC. The region spanning 246 to 327 is the Toprim domain; sequence KQVIVTEGYL…RGGVILFENN (82 aa). Residues E252, D296, and D298 each contribute to the Mg(2+) site.

This sequence belongs to the DnaG primase family. In terms of assembly, monomer. The C-terminal domain DnaB-binding domain exists as a dimer in solution. Interacts with DnaB via its C-terminal domain (residues 415-559 of DnaG); up to 3 DnaG fragments bind to a DnaB hexamer. Requires Zn(2+) as cofactor. It depends on Mg(2+) as a cofactor.

It carries out the reaction ssDNA + n NTP = ssDNA/pppN(pN)n-1 hybrid + (n-1) diphosphate.. Its function is as follows. RNA polymerase that catalyzes the synthesis of short RNA molecules used as primers for DNA polymerase during DNA replication. Stimulates the 5'-3' DNA helicase activity of DnaB. The protein is DNA primase of Helicobacter pylori (strain ATCC 700392 / 26695) (Campylobacter pylori).